We begin with the raw amino-acid sequence, 271 residues long: Glutamate racemase (271 aa).

Substrate-binding positions include 12 to 13 (DS) and 44 to 45 (YG). The active-site Proton donor/acceptor is cysteine 75. 76 to 77 (NS) serves as a coordination point for substrate. The Proton donor/acceptor role is filled by cysteine 185. 186–187 (TH) contributes to the substrate binding site.

Belongs to the aspartate/glutamate racemases family.

The catalysed reaction is L-glutamate = D-glutamate. It functions in the pathway cell wall biogenesis; peptidoglycan biosynthesis. Its function is as follows. Provides the (R)-glutamate required for cell wall biosynthesis. The sequence is that of Glutamate racemase from Mycobacterium bovis (strain BCG / Pasteur 1173P2).